The following is a 199-amino-acid chain: NAD(P)H dehydrogenase (quinone) (199 aa).

In terms of domain architecture, Flavodoxin-like spans 4–190 (ILVLYYSMYG…AIARFQGEHV (187 aa)). Residues 10-15 (SMYGHI) and 79-81 (TRF) contribute to the FMN site. Residue Y12 coordinates NAD(+). W99 contacts substrate. FMN-binding positions include 114-119 (STGTGG) and H134.

The protein belongs to the WrbA family. FMN is required as a cofactor.

It catalyses the reaction a quinone + NADH + H(+) = a quinol + NAD(+). It carries out the reaction a quinone + NADPH + H(+) = a quinol + NADP(+). This is NAD(P)H dehydrogenase (quinone) from Yersinia pseudotuberculosis serotype O:1b (strain IP 31758).